A 954-amino-acid chain; its full sequence is Glycine dehydrogenase (decarboxylating) (954 aa).

At Lys704 the chain carries N6-(pyridoxal phosphate)lysine.

Belongs to the GcvP family. As to quaternary structure, the glycine cleavage system is composed of four proteins: P, T, L and H. It depends on pyridoxal 5'-phosphate as a cofactor.

It carries out the reaction N(6)-[(R)-lipoyl]-L-lysyl-[glycine-cleavage complex H protein] + glycine + H(+) = N(6)-[(R)-S(8)-aminomethyldihydrolipoyl]-L-lysyl-[glycine-cleavage complex H protein] + CO2. Functionally, the glycine cleavage system catalyzes the degradation of glycine. The P protein binds the alpha-amino group of glycine through its pyridoxal phosphate cofactor; CO(2) is released and the remaining methylamine moiety is then transferred to the lipoamide cofactor of the H protein. The chain is Glycine dehydrogenase (decarboxylating) from Agrobacterium fabrum (strain C58 / ATCC 33970) (Agrobacterium tumefaciens (strain C58)).